The chain runs to 264 residues: uncharacterized protein (264 aa).

Residues 19–45 (AQEESMEQLKDINTKIDNSEKKISLEN) are a coiled coil.

This is an uncharacterized protein from Acanthamoeba polyphaga mimivirus (APMV).